A 167-amino-acid polypeptide reads, in one-letter code: Interferon gamma (167 aa).

The first 23 residues, 1 to 23, serve as a signal peptide directing secretion; sequence MNYTGYLLAFQLCIILGSSSCYC. Q24 carries the pyrrolidone carboxylic acid modification. Residues N39 and N105 are each glycosylated (N-linked (GlcNAc...) asparagine). The interval 148 to 167 is disordered; that stretch reads SNLRKRKRSQSTFHGRRASI. Residues 149–167 show a composition bias toward basic residues; it reads NLRKRKRSQSTFHGRRASI.

This sequence belongs to the type II (or gamma) interferon family. As to quaternary structure, homodimer. Interacts with IFNGR1 (via extracellular domain); this interaction promotes IFNGR1 dimerization. As to expression, released primarily from activated T lymphocytes.

The protein resides in the secreted. Functionally, type II interferon produced by immune cells such as T-cells and NK cells that plays crucial roles in antimicrobial, antiviral, and antitumor responses by activating effector immune cells and enhancing antigen presentation. Primarily signals through the JAK-STAT pathway after interaction with its receptor IFNGR1 to affect gene regulation. Upon IFNG binding, IFNGR1 intracellular domain opens out to allow association of downstream signaling components JAK2, JAK1 and STAT1, leading to STAT1 activation, nuclear translocation and transcription of IFNG-regulated genes. Many of the induced genes are transcription factors such as IRF1 that are able to further drive regulation of a next wave of transcription. Plays a role in class I antigen presentation pathway by inducing a replacement of catalytic proteasome subunits with immunoproteasome subunits. In turn, increases the quantity, quality, and repertoire of peptides for class I MHC loading. Increases the efficiency of peptide generation also by inducing the expression of activator PA28 that associates with the proteasome and alters its proteolytic cleavage preference. Up-regulates as well MHC II complexes on the cell surface by promoting expression of several key molecules such as cathepsins B/CTSB, H/CTSH, and L/CTSL. Participates in the regulation of hematopoietic stem cells during development and under homeostatic conditions by affecting their development, quiescence, and differentiation. The polypeptide is Interferon gamma (IFNG) (Dasypus novemcinctus (Nine-banded armadillo)).